Here is a 104-residue protein sequence, read N- to C-terminus: Portal vertex auxiliary protein (104 aa).

Cysteine 25 and cysteine 88 are oxidised to a cystine.

Homodimer; disulfide-linked. Interacts with the major capsid protein.

It is found in the virion. The chain is Portal vertex auxiliary protein from Bacteroides intestinalis (Bacteroides phage PhiCrAss001).